The primary structure comprises 310 residues: Ribosomal RNA small subunit methyltransferase H (310 aa).

S-adenosyl-L-methionine is bound by residues 33–35, D53, Y83, D100, and Q107; that span reads AGH.

This sequence belongs to the methyltransferase superfamily. RsmH family.

The protein resides in the cytoplasm. It catalyses the reaction cytidine(1402) in 16S rRNA + S-adenosyl-L-methionine = N(4)-methylcytidine(1402) in 16S rRNA + S-adenosyl-L-homocysteine + H(+). Functionally, specifically methylates the N4 position of cytidine in position 1402 (C1402) of 16S rRNA. This chain is Ribosomal RNA small subunit methyltransferase H, found in Clostridium perfringens (strain ATCC 13124 / DSM 756 / JCM 1290 / NCIMB 6125 / NCTC 8237 / Type A).